A 65-amino-acid chain; its full sequence is Large ribosomal subunit protein bL33c (65 aa).

Belongs to the bacterial ribosomal protein bL33 family.

It is found in the plastid. Its subcellular location is the chloroplast. The chain is Large ribosomal subunit protein bL33c from Zygnema circumcarinatum (Green alga).